The sequence spans 414 residues: MKIYLVGGAVRDSLLNLPVKDKDWVVVGGTEKILLERNFQQVGKDFPVFLHPETHEEYALARKERKSGKGYTGFDTDCNSDVTLEEDLIRRDLTINAIAQDEYGNYIDPFQGKKDIECGLIRHVSESFIEDPLRVLRVARFAATLVHLGFKIAEETMLLMCIIVKKQELSYLTSNRIWNETEKALKTLNPHVYFQVLYECNALHFFFPEMYFLYEKKNFLNRSFFKKFCNKNIILMGLAEISLLNKDIDVRFSYLCQFLSVNQIDRNYSKIFFDSYAASIIHSLCKRFKIPSYIRDIAVLNTGFYFFLNTIHYQSSKNIINLFSKVDAWRKPDRVKKLAFLSNFNFLRNFKSEFFCIKSGCFLEKCFSVVKNVSIKLILKKGFKGYEIKQEITRLRIKKLEFWRIKNIKHRFYL.

Positions 8 and 11 each coordinate ATP. 2 residues coordinate CTP: G8 and R11. 2 residues coordinate Mg(2+): D21 and D23. ATP is bound by residues R91, R137, and R140. CTP contacts are provided by R91, R137, and R140.

This sequence belongs to the tRNA nucleotidyltransferase/poly(A) polymerase family. Bacterial CCA-adding enzyme type 2 subfamily. The cofactor is Mg(2+).

It catalyses the reaction a tRNA precursor + 2 CTP + ATP = a tRNA with a 3' CCA end + 3 diphosphate. The enzyme catalyses a tRNA with a 3' CCA end + 2 CTP + ATP = a tRNA with a 3' CCACCA end + 3 diphosphate. In terms of biological role, catalyzes the addition and repair of the essential 3'-terminal CCA sequence in tRNAs without using a nucleic acid template. Adds these three nucleotides in the order of C, C, and A to the tRNA nucleotide-73, using CTP and ATP as substrates and producing inorganic pyrophosphate. tRNA 3'-terminal CCA addition is required both for tRNA processing and repair. Also involved in tRNA surveillance by mediating tandem CCA addition to generate a CCACCA at the 3' terminus of unstable tRNAs. While stable tRNAs receive only 3'-terminal CCA, unstable tRNAs are marked with CCACCA and rapidly degraded. The protein is CCA-adding enzyme of Buchnera aphidicola subsp. Acyrthosiphon pisum (strain Tuc7).